The primary structure comprises 553 residues: Putative transport protein YidE (553 aa).

5 helical membrane passes run 4–24 (IALT…IGNV), 28–48 (GIGL…HFVS), 65–85 (FGLI…FFAS), 95–115 (LFAV…HKLF), and 158–178 (MSYA…MWML). RCK C-terminal domains lie at 191 to 276 (QQHE…VIGQ) and 279 to 361 (DTSL…VLGN). Transmembrane regions (helical) follow at residues 371-391 (MLPV…PVFV), 393-413 (GFPA…ALIL), 439-459 (IVLF…NTLV), 464-484 (LSWI…VGIL), 493-513 (YLTM…LAFA), and 533-553 (LVMF…WSIG).

This sequence belongs to the AAE transporter (TC 2.A.81) family. YidE subfamily.

The protein localises to the cell membrane. The chain is Putative transport protein YidE from Shigella boydii serotype 18 (strain CDC 3083-94 / BS512).